Reading from the N-terminus, the 230-residue chain is 5'-methylthioadenosine/S-adenosylhomocysteine nucleosidase (230 aa).

Glu12 functions as the Proton acceptor in the catalytic mechanism. Residues Gly78, Ile153, and 174–175 contribute to the substrate site; that span reads ME. Asp198 (proton donor) is an active-site residue.

Belongs to the PNP/UDP phosphorylase family. MtnN subfamily.

It catalyses the reaction S-adenosyl-L-homocysteine + H2O = S-(5-deoxy-D-ribos-5-yl)-L-homocysteine + adenine. The enzyme catalyses S-methyl-5'-thioadenosine + H2O = 5-(methylsulfanyl)-D-ribose + adenine. It carries out the reaction 5'-deoxyadenosine + H2O = 5-deoxy-D-ribose + adenine. The protein operates within amino-acid biosynthesis; L-methionine biosynthesis via salvage pathway; S-methyl-5-thio-alpha-D-ribose 1-phosphate from S-methyl-5'-thioadenosine (hydrolase route): step 1/2. Catalyzes the irreversible cleavage of the glycosidic bond in both 5'-methylthioadenosine (MTA) and S-adenosylhomocysteine (SAH/AdoHcy) to adenine and the corresponding thioribose, 5'-methylthioribose and S-ribosylhomocysteine, respectively. Also cleaves 5'-deoxyadenosine, a toxic by-product of radical S-adenosylmethionine (SAM) enzymes, into 5-deoxyribose and adenine. The chain is 5'-methylthioadenosine/S-adenosylhomocysteine nucleosidase from Shewanella halifaxensis (strain HAW-EB4).